We begin with the raw amino-acid sequence, 279 residues long: 3-methyl-2-oxobutanoate hydroxymethyltransferase (279 aa).

Mg(2+) contacts are provided by Asp43 and Asp82. 3-methyl-2-oxobutanoate is bound by residues 43–44, Asp82, and Lys112; that span reads DS. Glu114 lines the Mg(2+) pocket. Glu181 functions as the Proton acceptor in the catalytic mechanism.

It belongs to the PanB family. In terms of assembly, homodecamer; pentamer of dimers. Requires Mg(2+) as cofactor.

The protein resides in the cytoplasm. The catalysed reaction is 3-methyl-2-oxobutanoate + (6R)-5,10-methylene-5,6,7,8-tetrahydrofolate + H2O = 2-dehydropantoate + (6S)-5,6,7,8-tetrahydrofolate. It participates in cofactor biosynthesis; (R)-pantothenate biosynthesis; (R)-pantoate from 3-methyl-2-oxobutanoate: step 1/2. Its function is as follows. Catalyzes the reversible reaction in which hydroxymethyl group from 5,10-methylenetetrahydrofolate is transferred onto alpha-ketoisovalerate to form ketopantoate. In Geobacillus kaustophilus (strain HTA426), this protein is 3-methyl-2-oxobutanoate hydroxymethyltransferase.